Here is a 48-residue protein sequence, read N- to C-terminus: Delta-stichotoxin-Hcr1a (48 aa).

3 cysteine pairs are disulfide-bonded: Cys3–Cys43, Cys5–Cys33, and Cys26–Cys44. Lys48 carries the post-translational modification Lysine amide; partial; in Delta-stichotoxin-Hcr1f.

This sequence belongs to the sea anemone sodium channel inhibitory toxin family. Type II subfamily. Probably composed of two peptide chains of 12 and 35 residues connected by two disulfide bonds (Cys-3-Cys-43 and Cys-5-Cys-33). Post-translationally, delta-SHTX-Hcr1f (RTX-VI) may be the result of post-translational modification of delta-SHTX-Hcr1a (RTX-III), which would consist of Arg-13 cleavage.

It is found in the secreted. The protein localises to the nematocyst. In terms of biological role, binds to site 3 of voltage-gated sodium channels and inhibits the inactivation process. Specifically inhibits mammalian Nav1.3/SCN3A and Nav1.6/SCN8A sodium channels, as well as insect BgNav1 and VdNav1 sodium channels. Binds to site 3 of voltage-gated sodium channels and inhibits the inactivation process. Specifically inhibits mammalian Nav1.2/SCN3A (low inhibition) and Nav1.6/SCN8A sodium channels, as well as insect BgNav1 and VdNav1 sodium channels. The polypeptide is Delta-stichotoxin-Hcr1a (Radianthus crispa (Leathery sea anemone)).